A 60-amino-acid chain; its full sequence is Large ribosomal subunit protein uL30 (60 aa).

Belongs to the universal ribosomal protein uL30 family. In terms of assembly, part of the 50S ribosomal subunit.

The chain is Large ribosomal subunit protein uL30 from Dehalococcoides mccartyi (strain ATCC BAA-2266 / KCTC 15142 / 195) (Dehalococcoides ethenogenes (strain 195)).